Here is a 510-residue protein sequence, read N- to C-terminus: Zinc finger and SCAN domain-containing protein 18 (510 aa).

Residues 1 to 40 (MLPLEKAFASPRSSPAPPDLPTPGSAAGVQQEEPETIPER) are disordered. In terms of domain architecture, SCAN box spans 49-131 (RLRFREFVYQ…SLVEGLADVL (83 aa)). 4 disordered regions span residues 172–191 (ALGAGEIPAPSETPWLSPDP), 201–231 (EAKTEEDGPANTEQKLKSFPEDPQHLGEWGH), 263–413 (TEEL…GKPY), and 461–510 (KTHE…EAQR). Composition is skewed to basic and acidic residues over residues 214–231 (QKLKSFPEDPQHLGEWGH) and 263–273 (TEELRLVERDP). Low complexity predominate over residues 288–299 (AGCACEEAAPAG). Positions 344-356 (DSATGSQRQSVIQ) are enriched in polar residues. C2H2-type zinc fingers lie at residues 413-435 (YACGECGEAFAWLSHLMEHHSSH) and 441-463 (YACQGCWKTFHFSLALAEHQKTH). Over residues 491–501 (GGPPESVEGEA) the composition is skewed to low complexity.

This sequence belongs to the krueppel C2H2-type zinc-finger protein family.

The protein localises to the nucleus. Functionally, may be involved in transcriptional regulation. This is Zinc finger and SCAN domain-containing protein 18 (ZSCAN18) from Homo sapiens (Human).